Reading from the N-terminus, the 116-residue chain is Co-chaperonin GroES (116 aa).

Belongs to the GroES chaperonin family. As to quaternary structure, heptamer of 7 subunits arranged in a ring. Interacts with the chaperonin GroEL.

Its subcellular location is the cytoplasm. Functionally, together with the chaperonin GroEL, plays an essential role in assisting protein folding. The GroEL-GroES system forms a nano-cage that allows encapsulation of the non-native substrate proteins and provides a physical environment optimized to promote and accelerate protein folding. GroES binds to the apical surface of the GroEL ring, thereby capping the opening of the GroEL channel. This is Co-chaperonin GroES from Mycoplasma pneumoniae (strain ATCC 29342 / M129 / Subtype 1) (Mycoplasmoides pneumoniae).